Here is a 143-residue protein sequence, read N- to C-terminus: Large ribosomal subunit protein uL16 (143 aa).

The segment covering 1 to 17 (MLQPKKTKFRRSQKGRM) has biased composition (basic residues). Positions 1–25 (MLQPKKTKFRRSQKGRMKGNAQRGN) are disordered.

Belongs to the universal ribosomal protein uL16 family. Part of the 50S ribosomal subunit.

Functionally, binds 23S rRNA and is also seen to make contacts with the A and possibly P site tRNAs. The polypeptide is Large ribosomal subunit protein uL16 (Azobacteroides pseudotrichonymphae genomovar. CFP2).